The chain runs to 62 residues: Large ribosomal subunit protein uL29 (62 aa).

It belongs to the universal ribosomal protein uL29 family.

The polypeptide is Large ribosomal subunit protein uL29 (Laribacter hongkongensis (strain HLHK9)).